We begin with the raw amino-acid sequence, 122 residues long: MTMNAQAIINSIEAEFLKEDLPTIHVGDTIKVGVKIVEGGKERIQPYEGTVIAKRNGGISETITVRKIFQGVGVERVFLLHSPRVASIKVLRRGKVRRAKLYYLRDRVGKATRIKQRFDRAL.

This sequence belongs to the bacterial ribosomal protein bL19 family.

Functionally, this protein is located at the 30S-50S ribosomal subunit interface and may play a role in the structure and function of the aminoacyl-tRNA binding site. In Synechocystis sp. (strain ATCC 27184 / PCC 6803 / Kazusa), this protein is Large ribosomal subunit protein bL19 (rplS).